Reading from the N-terminus, the 409-residue chain is Nucleoprotein (409 aa).

4 disordered regions span residues 1–32, 46–68, 164–196, and 238–258; these read MASGKATGKTDAPAPVIKLGGPKPPKVGSSGN, IPPPKFEGSGVPDNENLKSSQQH, RSGRSTAASSAASSRAPSREVSRGRRSGSEDDL, and VDQVFGPRTKGKEGNFGDDKM. Residues 15–31 are compositionally biased toward low complexity; the sequence is PVIKLGGPKPPKVGSSG. Residues 29–160 are RNA-binding; sequence SSGNASWFQA…GNFRWDFIPL (132 aa). Residues 31–156 form the CoV N NTD domain; that stretch reads GNASWFQAIK…GGPDGNFRWD (126 aa). Residues 166–179 show a composition bias toward low complexity; sequence GRSTAASSAASSRA. 2 stretches are compositionally biased toward basic and acidic residues: residues 180–192 and 247–258; these read PSREVSRGRRSGS and KGKEGNFGDDKM. S190 and S192 each carry phosphoserine; by host. The CoV N CTD domain occupies 215–331; that stretch reads TKAKADEMAH…QCVDGVGTRP (117 aa). The tract at residues 226 to 333 is dimerization; the sequence is RYCKRTIPPN…VDGVGTRPKD (108 aa). A disulfide bond links C320 and C323. Residues 326 to 409 form a disordered region; that stretch reads GVGTRPKDDE…GDAALGENEL (84 aa). Over residues 358 to 367 the composition is skewed to basic residues; the sequence is QRPKKEKKPK. A compositionally biased stretch (basic and acidic residues) spans 368–384; that stretch reads KHDDEVDKALTSDEERN. T378 carries the post-translational modification Phosphothreonine; by host. S379 carries the phosphoserine; by host modification.

It belongs to the gammacoronavirus nucleocapsid protein family. In terms of assembly, homooligomer. Both monomeric and oligomeric forms interact with RNA. Interacts with protein M. Interacts with NSP3; this interaction serves to tether the genome to the newly translated replicase-transcriptase complex at a very early stage of infection. In terms of processing, ADP-ribosylated. The ADP-ribosylation is retained in the virion during infection. Post-translationally, phosphorylated on serine and threonine residues.

The protein localises to the virion. It is found in the host endoplasmic reticulum-Golgi intermediate compartment. The protein resides in the host Golgi apparatus. In terms of biological role, packages the positive strand viral genome RNA into a helical ribonucleocapsid (RNP) and plays a fundamental role during virion assembly through its interactions with the viral genome and membrane protein M. Plays an important role in enhancing the efficiency of subgenomic viral RNA transcription as well as viral replication. This chain is Nucleoprotein, found in Avian infectious bronchitis virus (strain M41) (IBV).